An 82-amino-acid polypeptide reads, in one-letter code: NADH-ubiquinone oxidoreductase 9.5 kDa subunit (82 aa).

Residues 25-43 (AYFYSCVIAGLGPVFLTVV) form a helical membrane-spanning segment.

Belongs to the complex I NDUFA3 subunit family. Complex I is composed of about 40 different subunits.

It is found in the mitochondrion inner membrane. Accessory subunit of the mitochondrial membrane respiratory chain NADH dehydrogenase (Complex I), that is believed not to be involved in catalysis. Complex I functions in the transfer of electrons from NADH to the respiratory chain. The immediate electron acceptor for the enzyme is believed to be ubiquinone. This subunit binds ubiquinone. This Neurospora crassa (strain ATCC 24698 / 74-OR23-1A / CBS 708.71 / DSM 1257 / FGSC 987) protein is NADH-ubiquinone oxidoreductase 9.5 kDa subunit (nuo9.5).